The sequence spans 127 residues: Small ribosomal subunit protein uS13 (127 aa).

The interval 92–127 (HRMGLPVRGQRTRTNARTRRGVRRTVAGKKKASAKK) is disordered. The segment covering 101–127 (QRTRTNARTRRGVRRTVAGKKKASAKK) has biased composition (basic residues).

Belongs to the universal ribosomal protein uS13 family. In terms of assembly, part of the 30S ribosomal subunit. Forms a loose heterodimer with protein S19. Forms two bridges to the 50S subunit in the 70S ribosome.

Located at the top of the head of the 30S subunit, it contacts several helices of the 16S rRNA. In the 70S ribosome it contacts the 23S rRNA (bridge B1a) and protein L5 of the 50S subunit (bridge B1b), connecting the 2 subunits; these bridges are implicated in subunit movement. Contacts the tRNAs in the A and P-sites. The chain is Small ribosomal subunit protein uS13 from Trichodesmium erythraeum (strain IMS101).